Reading from the N-terminus, the 230-residue chain is Probable endonuclease C19F8.04c (230 aa).

A helical transmembrane segment spans residues 10-27 (AIIGTGLITTSIGGFFFL). The TNase-like domain occupies 55-216 (KTMFGYVTRV…KKKKLSLWSQ (162 aa)). The active site involves R104. A Ca(2+)-binding site is contributed by D109. Catalysis depends on residues E112 and R152.

This sequence belongs to the LCL3 family.

It localises to the mitochondrion. The protein resides in the membrane. This is Probable endonuclease C19F8.04c from Schizosaccharomyces pombe (strain 972 / ATCC 24843) (Fission yeast).